The chain runs to 249 residues: Cysteine-rich secretory protein 1 (249 aa).

Residues 1–20 (MEIKHLLFLVAAACLLPVLS) form the signal peptide. Positions 45-175 (VNIHNTLRRG…SPRYFYVCHY (131 aa)) constitute an SCP domain. N-linked (GlcNAc...) asparagine glycosylation is present at asparagine 104. Intrachain disulfides connect cysteine 195–cysteine 202, cysteine 198–cysteine 207, cysteine 211–cysteine 244, cysteine 220–cysteine 238, and cysteine 229–cysteine 242. Residues 211–244 (CIYYDEYTDCSLEVRFLGCNHSTPRMFCKATCLC) form the ShKT domain. The N-linked (GlcNAc...) asparagine glycan is linked to asparagine 230.

Belongs to the CRISP family. As to expression, expressed in all the regions of the epididymis except the caput and is not detected in the testis, prostate, seminal vesicle, and brain.

May have a role in sperm-egg fusion and maturation. This chain is Cysteine-rich secretory protein 1 (CRISP1), found in Macaca mulatta (Rhesus macaque).